Reading from the N-terminus, the 197-residue chain is TATA-box-binding protein (197 aa).

A run of 2 repeats spans residues 10-86 (IENI…VKLL) and 101-177 (IQNI…YNQL).

This sequence belongs to the TBP family.

General factor that plays a role in the activation of archaeal genes transcribed by RNA polymerase. Binds specifically to the TATA box promoter element which lies close to the position of transcription initiation. In Pyrobaculum neutrophilum (strain DSM 2338 / JCM 9278 / NBRC 100436 / V24Sta) (Thermoproteus neutrophilus), this protein is TATA-box-binding protein.